We begin with the raw amino-acid sequence, 840 residues long: Homeobox-leucine zipper protein HOX9 (840 aa).

2 disordered regions span residues 1–26 and 135–160; these read MAAAVAMRSGSGSDGGGGGYDKAGMD and NPSLGNDTSCESNVTTPQNPLRDASN. Residues 12 to 21 show a composition bias toward gly residues; it reads GSDGGGGGYD. The homeobox DNA-binding region spans 26-89; the sequence is DSGKYVRYTP…NRRCRDKQRK (64 aa). The stretch at 86–135 forms a coiled coil; the sequence is KQRKEASRLQAVNRKLTAMNKLLMEENERLQKQVSQLVHENAYMKQQLQN. The START domain maps to 157-385; the sequence is DASNPSGLLT…IAQETSGEVV (229 aa).

The protein belongs to the HD-ZIP homeobox family. Class III subfamily. Expressed in seedlings, roots, stems, leaf sheaths and blades and panicles.

It localises to the nucleus. Probable transcription factor. This chain is Homeobox-leucine zipper protein HOX9 (HOX9), found in Oryza sativa subsp. japonica (Rice).